The chain runs to 363 residues: Peroxisomal (S)-2-hydroxyacid oxidase GLO3 (363 aa).

Positions 1-357 (MDQIVNVDEF…TRNHVRTENE (357 aa)) constitute an FMN hydroxy acid dehydrogenase domain. FMN is bound by residues 78–80 (PTG), serine 107, 128–130 (QIY), and threonine 156. Tyrosine 130 contacts a 2-oxocarboxylate. Arginine 165 is an a 2-oxocarboxylate binding site. Residues lysine 228 and serine 250 each contribute to the FMN site. Residue histidine 252 is the Proton acceptor of the active site. Arginine 255 provides a ligand contact to a 2-oxocarboxylate. FMN contacts are provided by residues 283–287 (DGGVR) and 306–307 (GR). Residues 361 to 363 (SML) carry the Microbody targeting signal motif.

The protein belongs to the FMN-dependent alpha-hydroxy acid dehydrogenase family. As to quaternary structure, homotetramer. The cofactor is FMN.

It localises to the peroxisome. The catalysed reaction is a (2S)-2-hydroxycarboxylate + O2 = a 2-oxocarboxylate + H2O2. It catalyses the reaction 2-hydroxy-4-methylpentanoate + O2 = 4-methyl-2-oxopentanoate + H2O2. It carries out the reaction 2-hydroxyhexanoate + O2 = 2-oxohexanoate + H2O2. The enzyme catalyses 2-hydroxyoctanoate + O2 = 2-oxooctanoate + H2O2. Oxidase that catalyzes the oxidation of a broad range of 2-hydroxyacids to the corresponding 2-oxoacids, with a reduction of O2 to H2O2. Displays the highest activity with leucic acid (2-hydroxy-4-methylpentanoate) and has intermediate activity with 2-hydroxyhexanoate and 2-hydroxyoctanote. Shows lower activity with 2-hydroxydodecanoate, valic acid, and isoleucic acid and extremely low activity with glycolate and L-lactate. Cannot use 2-hydroxyhexadecanoate or D-lactate as substrates. May be involved in the conversion or degradation of 2-hydroxyacids produced during the metabolism of fatty acids or amino acids. The chain is Peroxisomal (S)-2-hydroxyacid oxidase GLO3 (GLO3) from Arabidopsis thaliana (Mouse-ear cress).